Consider the following 128-residue polypeptide: Large ribosomal subunit protein bL12 (128 aa).

This sequence belongs to the bacterial ribosomal protein bL12 family. Homodimer. Part of the ribosomal stalk of the 50S ribosomal subunit. Forms a multimeric L10(L12)X complex, where L10 forms an elongated spine to which 2 to 4 L12 dimers bind in a sequential fashion. Binds GTP-bound translation factors.

In terms of biological role, forms part of the ribosomal stalk which helps the ribosome interact with GTP-bound translation factors. Is thus essential for accurate translation. This Synechocystis sp. (strain ATCC 27184 / PCC 6803 / Kazusa) protein is Large ribosomal subunit protein bL12.